A 208-amino-acid chain; its full sequence is Ribosomal RNA large subunit methyltransferase E (208 aa).

S-adenosyl-L-methionine is bound by residues Gly-61, Trp-63, Asp-81, Asp-97, and Asp-122. Lys-162 acts as the Proton acceptor in catalysis.

This sequence belongs to the class I-like SAM-binding methyltransferase superfamily. RNA methyltransferase RlmE family.

It is found in the cytoplasm. The catalysed reaction is uridine(2552) in 23S rRNA + S-adenosyl-L-methionine = 2'-O-methyluridine(2552) in 23S rRNA + S-adenosyl-L-homocysteine + H(+). Functionally, specifically methylates the uridine in position 2552 of 23S rRNA at the 2'-O position of the ribose in the fully assembled 50S ribosomal subunit. This is Ribosomal RNA large subunit methyltransferase E from Pseudomonas putida (strain W619).